Reading from the N-terminus, the 684-residue chain is Glycine--tRNA ligase beta subunit (684 aa).

Belongs to the class-II aminoacyl-tRNA synthetase family. In terms of assembly, tetramer of two alpha and two beta subunits.

It localises to the cytoplasm. The enzyme catalyses tRNA(Gly) + glycine + ATP = glycyl-tRNA(Gly) + AMP + diphosphate. The polypeptide is Glycine--tRNA ligase beta subunit (Pseudomonas aeruginosa (strain ATCC 15692 / DSM 22644 / CIP 104116 / JCM 14847 / LMG 12228 / 1C / PRS 101 / PAO1)).